We begin with the raw amino-acid sequence, 93 residues long: Small ribosomal subunit protein uS19 (93 aa).

This sequence belongs to the universal ribosomal protein uS19 family.

Its function is as follows. Protein S19 forms a complex with S13 that binds strongly to the 16S ribosomal RNA. The protein is Small ribosomal subunit protein uS19 of Campylobacter fetus subsp. fetus (strain 82-40).